The following is a 471-amino-acid chain: CGKSYEEEEEEEDDELEADVAQNLSSKRSARQLDADMENEVLNLARSVSPAAKRLALEHTAEPALAAQSAAAATPPVGLSLPPTAPLGFGPEDMQQALQLQLHSYIEMVRQLAPDAFPNPNLATQFLLQNSLQALAQFQALQQLKQQRDQQLPTASEQLPTRHYSTPLSKSPLRSPSLSPVARSMEPQQAQRTPPNSLAAAGLGLSSAVLTPNTPSMQQQQQQTMTSTTNASSTPKPLASGATVAAVMATKLEQSPEETTDLEELEQFAKTFKQRRIKLGFTQGDVGLAMGKLYGNDFSQTTISRFEALNLSFKNMCKLKPLLQKWLEDADSSVAKSAGGVFNINTMTTNLSSTPESILGRRRKKRTSIETTIRGALEQAFVLNCKPTSEEINQLSERLHMDKEVVRVWFCNRRQKEKRINPSLDLDSPTGTPLSSHAFGYPPQALNMSNGGHVLLEAGGSHCGSSISSGE.

The segment covering 1 to 18 (CGKSYEEEEEEEDDELEA) has biased composition (acidic residues). Disordered regions lie at residues 1–32 (CGKS…SARQ) and 149–238 (DQQL…PKPL). Over residues 165–180 (STPLSKSPLRSPSLSP) the composition is skewed to low complexity. The span at 186 to 196 (EPQQAQRTPPN) shows a compositional bias: polar residues. A compositionally biased stretch (low complexity) spans 197–230 (SLAAAGLGLSSAVLTPNTPSMQQQQQQTMTSTTN). Residues 257 to 331 (EETTDLEELE…LLQKWLEDAD (75 aa)) form the POU-specific domain. The homeobox DNA-binding region spans 362–421 (RRKKRTSIETTIRGALEQAFVLNCKPTSEEINQLSERLHMDKEVVRVWFCNRRQKEKRIN).

It belongs to the POU transcription factor family. Class-2 subfamily.

It is found in the nucleus. In terms of biological role, DNA-binding regulatory protein implicated in early development. Involved in neuronal cell fate decision. May act as an octamer-dependent activator of transcription. The protein is POU domain protein 2 (pdm2) of Drosophila virilis (Fruit fly).